A 516-amino-acid chain; its full sequence is MAGSTSASLQTPYFPSSTQINPVRVDHTLPLPPAQPSLSFTQGLLVGQLSVVLLIGAFIKFFIFGEAPPPPSRGLSNRTSTHPRSYSINAASTDSSPRLLREKPSTSNILRPVPSSSTNTRSILRKTYYSATPTHPTPKHGRPRLYHSSHQPESLDWFNVLIAQTIAQYRQTAYILKDSPTSSILASLSETLNNPEKKPSFIDIIKVTDISLGEEFPIFSNCRVIAVEDPNSDGGRLQALMDVDLSDDNLSLAIETSLLLNYPKPFSAVLPVALAVSVVRFSGTLCISFVPGPRTSDQTMSPIPTPHDTTSEAIDDQSSDQSSPAQNPDGPKDAHANTSNTTDASSKHGIPKTSLAFSFLPDYRLDLSVRSLIGSRSRLQDVPKVAQLVEARVQSWFEERVVEPRVQVVGLPNIWPRMGRTGLRSSQEEPEAGSGSVEIPVMTSPGTDGVSGGGGGGGSMRGIDRGLSGREVGYEALRFRHAACGGHQNQSGRDGGRGGNEQFAMPGSMPDTVTET.

The Lumenal portion of the chain corresponds to 1–43 (MAGSTSASLQTPYFPSSTQINPVRVDHTLPLPPAQPSLSFTQG). Residues 44–64 (LLVGQLSVVLLIGAFIKFFIF) traverse the membrane as a helical segment. Topologically, residues 65–516 (GEAPPPPSRG…GSMPDTVTET (452 aa)) are cytoplasmic. Disordered stretches follow at residues 70–118 (PPSR…SSST), 295–349 (TSDQ…SKHG), 420–466 (RTGL…IDRG), and 485–516 (GGHQ…VTET). Polar residues-rich tracts occupy residues 74–96 (GLSN…TDSS), 105–118 (STSN…SSST), and 295–312 (TSDQ…TTSE). Positions 151–412 (QPESLDWFNV…EPRVQVVGLP (262 aa)) constitute an SMP-LTD domain. Residues 449–460 (GVSGGGGGGGSM) show a composition bias toward gly residues.

Belongs to the MMM1 family. Homodimer. Component of the ER-mitochondria encounter structure (ERMES) or MDM complex, composed of MMM1, MDM10, MDM12 and MDM34. An MMM1 homodimer associates with one molecule of MDM12 on each side in a pairwise head-to-tail manner, and the SMP-LTD domains of MMM1 and MDM12 generate a continuous hydrophobic tunnel for phospholipid trafficking.

It is found in the endoplasmic reticulum membrane. Component of the ERMES/MDM complex, which serves as a molecular tether to connect the endoplasmic reticulum (ER) and mitochondria. Components of this complex are involved in the control of mitochondrial shape and protein biogenesis, and function in nonvesicular lipid trafficking between the ER and mitochondria. The MDM12-MMM1 subcomplex functions in the major beta-barrel assembly pathway that is responsible for biogenesis of all outer membrane beta-barrel proteins, and acts in a late step after the SAM complex. The MDM10-MDM12-MMM1 subcomplex further acts in the TOM40-specific pathway after the action of the MDM12-MMM1 complex. Essential for establishing and maintaining the structure of mitochondria and maintenance of mtDNA nucleoids. The protein is Maintenance of mitochondrial morphology protein 1 of Paracoccidioides brasiliensis (strain Pb18).